A 192-amino-acid chain; its full sequence is MAQMYFYYSAMNAGKSTTLLQSSFNYQERGMNPAIFTAAIDDRYGVGKVSSRIGLHAEAHLFNKETNVFDAIKELHEAEKLHCVLIDECQFLTKEQVYQLTEVVDKLNIPALCYGLRTDFLGELFEGSKYLLSWADKLVELKTICHCGRKANMVIRTDEHGVAIADGDQVAIGGNELYVSVCRRHYKEALGK.

Residues S9–S16 and D87–Q90 each bind ATP. Residue E88 is the Proton acceptor of the active site. Positions 145, 147, 182, and 185 each coordinate Zn(2+).

This sequence belongs to the thymidine kinase family. As to quaternary structure, homotetramer.

It is found in the cytoplasm. The enzyme catalyses thymidine + ATP = dTMP + ADP + H(+). In Aliivibrio fischeri (strain ATCC 700601 / ES114) (Vibrio fischeri), this protein is Thymidine kinase.